The chain runs to 571 residues: External alternative NAD(P)H-ubiquinone oxidoreductase B1, mitochondrial (571 aa).

A mitochondrion-targeting transit peptide spans 1–35 (MTLLSSLGRASRSAPLASKLLLLGTLSGGSIVAYA). 51 to 81 (KVVVLGTGWAGISFLKDLDITSYDVQVVSPQ) is a binding site for FAD. NAD(+) is bound at residue 215–251 (LHFVIVGGGPTGVEFAAELHDFIIEDITKIYPSVKEL). Positions 372-407 (KILGDIANIFKAADADNSGTLTMEELEGVVDDIIVR) constitute an EF-hand domain. Asp-385, Asp-387, Ser-389, Thr-391, and Glu-396 together coordinate Ca(2+). The Microbody targeting signal signature appears at 562 to 571 (YIFGRDSSRI).

This sequence belongs to the NADH dehydrogenase family. FAD serves as cofactor. In terms of tissue distribution, expressed in seedlings, roots, cotyledons, leaves, stems, buds and flowers.

Its subcellular location is the mitochondrion inner membrane. The protein localises to the peroxisome. It carries out the reaction a quinone + NADH + H(+) = a quinol + NAD(+). It catalyses the reaction a ubiquinone + NADH + H(+) = a ubiquinol + NAD(+). Activity is calcium-dependent with a more pronounced effect at higher pH. Its function is as follows. Alternative NADH-ubiquinone oxidoreductase which catalyzes the oxidation of mitochondrial NADH does not translocate protons across the inner mitochondrial membrane. Calcium-dependent NAD(P)H dehydrogenase. Binds calcium ions. This chain is External alternative NAD(P)H-ubiquinone oxidoreductase B1, mitochondrial (NDB1), found in Arabidopsis thaliana (Mouse-ear cress).